The following is a 573-amino-acid chain: Isocitrate dehydrogenase kinase/phosphatase (573 aa).

ATP is bound by residues 315-321 (APGIRGM) and Lys-336. Asp-371 is an active-site residue.

Belongs to the AceK family.

It is found in the cytoplasm. It catalyses the reaction L-seryl-[isocitrate dehydrogenase] + ATP = O-phospho-L-seryl-[isocitrate dehydrogenase] + ADP + H(+). In terms of biological role, bifunctional enzyme which can phosphorylate or dephosphorylate isocitrate dehydrogenase (IDH) on a specific serine residue. This is a regulatory mechanism which enables bacteria to bypass the Krebs cycle via the glyoxylate shunt in response to the source of carbon. When bacteria are grown on glucose, IDH is fully active and unphosphorylated, but when grown on acetate or ethanol, the activity of IDH declines drastically concomitant with its phosphorylation. The sequence is that of Isocitrate dehydrogenase kinase/phosphatase from Enterobacter sp. (strain 638).